The chain runs to 372 residues: Serine protease inhibitor 42Dd (372 aa).

Residues 1–15 form the signal peptide; sequence MYYLCIFLWVTSVAC. N-linked (GlcNAc...) asparagine glycosylation is found at asparagine 197 and asparagine 232.

It belongs to the serpin family. In terms of tissue distribution, expressed in the ovary.

It is found in the secreted. Its function is as follows. Serine protease inhibitor with activity toward trypsin. Involved in innate immunity to fungal infection by negatively regulating the Toll signaling pathway and suppressing the expression of the antifungal peptide drosomycin. Acts upstream of SPE and grass, and downstream of the fungal cell wall pattern recognition receptor GNBP3. May function specifically in the GNBP3-dependent beta-1,3-glucan branch of the Toll pathway. This Drosophila melanogaster (Fruit fly) protein is Serine protease inhibitor 42Dd.